Reading from the N-terminus, the 550-residue chain is Acetyl-coenzyme A transporter 1 (550 aa).

Residues 1-74 (MSPTISHKDN…KRSYRAELSS (74 aa)) lie on the Cytoplasmic side of the membrane. Ser-42 carries the phosphoserine modification. A helical transmembrane segment spans residues 75 to 95 (ILLLLFLYVLQGIPLGLAGSI). The Extracellular segment spans residues 96-113 (PLILQSKNVSYTDQAFFS). Asn-103 carries an N-linked (GlcNAc...) asparagine glycan. A helical transmembrane segment spans residues 114–134 (FVFWPFSLKLLWAPLVDAVYF). Residues 135–141 (KNFGRRK) are Cytoplasmic-facing. The chain crosses the membrane as a helical span at residues 142 to 162 (SWLVPTQYILGIFMIYLSTQV). Residues 163–256 (DRLLGNIDGR…FQPQPRGIVT (94 aa)) lie on the Extracellular side of the membrane. The chain crosses the membrane as a helical span at residues 257–277 (LSDFLFFWGTVFLITTTLVAL). Residues 278-300 (LKKETREASVVKEETQGITDTYK) are Cytoplasmic-facing. A helical membrane pass occupies residues 301-321 (LLFSIIKMPAVLAFCLLILTS). At 322–344 (KIGFSAADAVTGLKLVEEGVPKE) the chain is on the extracellular side. The chain crosses the membrane as a helical span at residues 345 to 365 (HLALLAVPMVPLQIILPLLIS). The Cytoplasmic portion of the chain corresponds to 366-375 (KYTAGPQPLN). A helical transmembrane segment spans residues 376–396 (IFYKAMPYRLLLGLEYALLVW). The Extracellular segment spans residues 397–405 (WTPKVEHQG). Residues 406 to 426 (GFPIYYYIIVLLSYALHQVTL) traverse the membrane as a helical segment. Topologically, residues 427 to 509 (YSMYVSIMAF…LGGSCVTALD (83 aa)) are cytoplasmic. A helical membrane pass occupies residues 510–530 (GYYVESIVCVLIGFGWWFFLG). Over 531–550 (PKFKKLQDEGPSSWKCKRTN) the chain is Extracellular.

Belongs to the SLC33A transporter family. As to quaternary structure, homodimerizes. As to expression, expressed in brain at all developmental stages. Detected in hippocampus, hypothalamus, cerebellum, cortex, olfactory bulb, and the ventral and dorsal anterior olfactory nucleus.

The protein resides in the endoplasmic reticulum membrane. It carries out the reaction acetyl-CoA(in) = acetyl-CoA(out). In terms of biological role, acetyl-CoA transporter that mediates active acetyl-CoA import through the endoplasmic reticulum (ER) membrane into the ER lumen where specific ER-based acetyl-CoA:lysine acetyltransferases are responsible for the acetylation of ER-based protein substrates, such as BACE1. Necessary for O-acetylation of gangliosides. The chain is Acetyl-coenzyme A transporter 1 (Slc33a1) from Rattus norvegicus (Rat).